Consider the following 85-residue polypeptide: UPF0473 protein CPR_1590 (85 aa).

The protein belongs to the UPF0473 family.

The protein is UPF0473 protein CPR_1590 of Clostridium perfringens (strain SM101 / Type A).